Reading from the N-terminus, the 908-residue chain is Glutamate receptor ionotropic, kainate 2 (908 aa).

Residues 1 to 31 form the signal peptide; sequence MKIIFPILSNPVFRRTVKLLLCLLWIGYSQG. Residues 32–561 are Extracellular-facing; it reads TTHVLRFGGI…VFSFLNPLSP (530 aa). N-linked (GlcNAc...) asparagine glycans are attached at residues Asn-67, Asn-73, Asn-275, Asn-378, Asn-412, Asn-423, and Asn-430. A disulfide bridge links Cys-96 with Cys-347. Residues Pro-516, Ala-518, and Arg-523 each coordinate L-glutamate. The N-linked (GlcNAc...) asparagine glycan is linked to Asn-546. The helical transmembrane segment at 562–582 threads the bilayer; sequence DIWMYILLAYLGVSCVLFVIA. At 583–635 the chain is on the cytoplasmic side; sequence RFSPYEWYNPHPCNPDSDVVENNFTLLNSFWFGVGALMQQGSELMPKALSTRI. Residues 636 to 656 traverse the membrane as a helical segment; the sequence is VGGIWWFFTLIIISSYTANLA. Residues 657-819 are Extracellular-facing; the sequence is AFLTVERMES…KEASALGVQN (163 aa). Positions 689, 690, and 738 each coordinate L-glutamate. Cys-750 and Cys-804 form a disulfide bridge. Residue Asn-751 is glycosylated (N-linked (GlcNAc...) asparagine). Residues 820 to 840 form a helical membrane-spanning segment; that stretch reads IGGIFIVLAAGLVLSVFVAVG. The Cytoplasmic segment spans residues 841–908; sequence EFLYKSKKNA…RRLPGKETMA (68 aa). Residues Ser-846 and Ser-868 each carry the phosphoserine; by PKC modification. Lys-886 is covalently cross-linked (Glycyl lysine isopeptide (Lys-Gly) (interchain with G-Cter in SUMO1)).

The protein belongs to the glutamate-gated ion channel (TC 1.A.10.1) family. GRIK2 subfamily. Homotetramer and heterotetramer with GRIK5. Tetramers may be formed by the dimerization of dimers. Assembles into a kainate-gated homomeric channel that does not bind AMPA. Can form functional heteromeric receptors with GRIK5. Can form functional heteromeric receptors with GRIK3 and GRIK4. Interacts with DLG4. Interacts with NETO2. Interacts (via C-terminus) with KLHL17 (via kelch repeats); the interaction targets GRIK2 for degradation via ubiquitin-proteasome pathway. In terms of processing, sumoylation mediates kainate receptor-mediated endocytosis and regulates synaptic transmission. Sumoylation is enhanced by PIAS3 and desumoylated by SENP1. Ubiquitinated. Ubiquitination regulates the GRIK2 levels at the synapse by leading kainate receptor degradation through proteasome. Post-translationally, phosphorylated by PKC at Ser-868 upon agonist activation, this directly enhance sumoylation. Expression is higher in cerebellum than in cerebral cortex.

The protein resides in the cell membrane. The protein localises to the postsynaptic cell membrane. The enzyme catalyses Ca(2+)(in) = Ca(2+)(out). The catalysed reaction is Na(+)(in) = Na(+)(out). Its activity is regulated as follows. Cold receptor activity activated by temperatures between 10-19 degrees Celsius. Ionotropic glutamate receptor that functions as a cation permeable ligand-gated ion channel, gated by L-glutamate and the glutamatergic agonist kainic acid. L-glutamate acts as an excitatory neurotransmitter at many synapses in the central nervous system. Binding of the excitatory neurotransmitter L-glutamate induces a conformation change, leading to the opening of the cation channel, and thereby converts the chemical signal to an electrical impulse. The receptor then desensitizes rapidly and enters a transient inactive state, characterized by the presence of bound agonist. Modulates cell surface expression of NETO2. In association with GRIK3, involved in presynaptic facilitation of glutamate release at hippocampal mossy fiber synapses. In terms of biological role, independent of its ionotropic glutamate receptor activity, acts as a thermoreceptor conferring sensitivity to cold temperatures. Functions in dorsal root ganglion neurons. In Homo sapiens (Human), this protein is Glutamate receptor ionotropic, kainate 2 (GRIK2).